Reading from the N-terminus, the 358-residue chain is uncharacterized protein (358 aa).

An ATP-binding site is contributed by 207–214; sequence AAVKDGKT.

This is an uncharacterized protein from Bacillus subtilis (strain 168).